The sequence spans 239 residues: Glucosamine-6-phosphate deaminase (239 aa).

The active-site Proton acceptor; for enolization step is Asp62. Asn128 serves as the catalytic For ring-opening step. His130 serves as the catalytic Proton acceptor; for ring-opening step. Glu135 functions as the For ring-opening step in the catalytic mechanism.

Belongs to the glucosamine/galactosamine-6-phosphate isomerase family. NagB subfamily.

It carries out the reaction alpha-D-glucosamine 6-phosphate + H2O = beta-D-fructose 6-phosphate + NH4(+). Its pathway is amino-sugar metabolism; N-acetylneuraminate degradation; D-fructose 6-phosphate from N-acetylneuraminate: step 5/5. Its function is as follows. Catalyzes the reversible isomerization-deamination of glucosamine 6-phosphate (GlcN6P) to form fructose 6-phosphate (Fru6P) and ammonium ion. This Lactobacillus johnsonii (strain CNCM I-12250 / La1 / NCC 533) protein is Glucosamine-6-phosphate deaminase.